The sequence spans 153 residues: UPF0756 membrane protein Lm4b_01579 (153 aa).

Transmembrane regions (helical) follow at residues 6–26 (MLFL…SLII), 54–74 (WGVT…QIGF), 80–100 (SFKS…SILA), and 117–137 (LVFG…GPVI).

This sequence belongs to the UPF0756 family.

Its subcellular location is the cell membrane. This chain is UPF0756 membrane protein Lm4b_01579, found in Listeria monocytogenes serotype 4b (strain CLIP80459).